The sequence spans 156 residues: MDKKVTEVVEAFAQPIVEELNLELVDVEYVKEGQDWFLRVFIDSEKGVDIEECGAVSERLSEALDKEDPIPHLYFLDVSSPGAERPLKKEKDFQQAVGKQVAIKTYEPIDGEKMFEGKLLSYDGTTITLLLTIKTRKKEIQIPMDKVANARLAVTF.

The protein belongs to the RimP family.

The protein resides in the cytoplasm. Functionally, required for maturation of 30S ribosomal subunits. This Bacillus cereus (strain G9842) protein is Ribosome maturation factor RimP.